Consider the following 249-residue polypeptide: Type III pantothenate kinase (249 aa).

6-13 is an ATP binding site; sequence DCGNSFIK. Substrate-binding positions include Y93 and 100 to 103; that span reads GLDR. Catalysis depends on D102, which acts as the Proton acceptor. D122 is a K(+) binding site. T125 provides a ligand contact to ATP. Residue T181 coordinates substrate.

This sequence belongs to the type III pantothenate kinase family. Homodimer. NH4(+) serves as cofactor. Requires K(+) as cofactor.

It is found in the cytoplasm. It carries out the reaction (R)-pantothenate + ATP = (R)-4'-phosphopantothenate + ADP + H(+). The protein operates within cofactor biosynthesis; coenzyme A biosynthesis; CoA from (R)-pantothenate: step 1/5. Catalyzes the phosphorylation of pantothenate (Pan), the first step in CoA biosynthesis. The chain is Type III pantothenate kinase from Pseudomonas fluorescens (strain Pf0-1).